Consider the following 443-residue polypeptide: Xaa-Pro dipeptidase (443 aa).

Positions 246, 257, 339, 384, and 423 each coordinate Mn(2+).

Belongs to the peptidase M24B family. Bacterial-type prolidase subfamily. Requires Mn(2+) as cofactor.

It carries out the reaction Xaa-L-Pro dipeptide + H2O = an L-alpha-amino acid + L-proline. Functionally, splits dipeptides with a prolyl residue in the C-terminal position. In Shigella boydii serotype 18 (strain CDC 3083-94 / BS512), this protein is Xaa-Pro dipeptidase.